Here is a 196-residue protein sequence, read N- to C-terminus: MAFKDWMNNLRDYFVEDDEEFNEPTRPVQESRPTVASTPKPKVEERKVQADYQSRRPAQSTPKPQAQTAAPKRSASTFSKPMPEKIVQQQTVSQAQSLAATVSTIAIKEPRAYADIMESARIVKNGECVLVNFKFMGDAQARRSIDFMTGVVFTLDGDIQNVGGQIFLMTPANITVDAAKEMSILAGKNFESYDIY.

The interval 15-80 (VEDDEEFNEP…PKRSASTFSK (66 aa)) is disordered. Polar residues predominate over residues 56–79 (RPAQSTPKPQAQTAAPKRSASTFS).

Belongs to the SepF family. As to quaternary structure, homodimer. Interacts with FtsZ.

It localises to the cytoplasm. Functionally, cell division protein that is part of the divisome complex and is recruited early to the Z-ring. Probably stimulates Z-ring formation, perhaps through the cross-linking of FtsZ protofilaments. Its function overlaps with FtsA. This is Cell division protein SepF from Lactococcus lactis subsp. cremoris (strain SK11).